The following is a 164-amino-acid chain: Small ribosomal subunit protein uS5 (164 aa).

The 64-residue stretch at 11–74 folds into the S5 DRBM domain; that stretch reads LKEKLISVNR…EKARKNMIII (64 aa).

This sequence belongs to the universal ribosomal protein uS5 family. As to quaternary structure, part of the 30S ribosomal subunit. Contacts proteins S4 and S8.

With S4 and S12 plays an important role in translational accuracy. In terms of biological role, located at the back of the 30S subunit body where it stabilizes the conformation of the head with respect to the body. The sequence is that of Small ribosomal subunit protein uS5 from Buchnera aphidicola subsp. Cinara cedri (strain Cc).